Reading from the N-terminus, the 265-residue chain is uncharacterized protein (265 aa).

Serine 223 carries the phosphoserine modification.

This is an uncharacterized protein from Saccharomyces cerevisiae (strain ATCC 204508 / S288c) (Baker's yeast).